The primary structure comprises 64 residues: Large ribosomal subunit protein bL35c (64 aa).

This sequence belongs to the bacterial ribosomal protein bL35 family.

The protein localises to the plastid. It is found in the chloroplast. The sequence is that of Large ribosomal subunit protein bL35c from Thalassiosira pseudonana (Marine diatom).